The sequence spans 1224 residues: WD repeat-containing protein 11 (1224 aa).

WD repeat units lie at residues 59–108 (KHKA…AQCE) and 111–154 (EHAK…KLWK). Phosphoserine occurs at positions 205 and 209. One copy of the WD 3 repeat lies at 354-393 (KTVRPFSMVCCPVNENAAALVVSDGRVMIWELKSAVCNRN). Residues Ser-402 and Ser-406 each carry the phosphoserine modification. 6 WD repeats span residues 471–510 (RMCP…LHKE), 566–605 (NDES…LLRE), 708–745 (GSMG…SRGI), 747–787 (THRS…MVSS), 793–831 (NVTF…ACFR), and 893–940 (SLSN…HSLS).

As to quaternary structure, component of the complex WDR11 composed of C17orf75, FAM91A1 and WDR11; FAM91A1 and WDR11 are required for proper location of the complex. Interacts (via the N-terminal and the central portion of the protein) with EMX1. Interacts with GLI3; the interaction associateS EMX1 with GLI3. Interacts with TBC1D23; this interaction may be indirect and recruits TBC1D23 to AP-1-derived vesicles. In terms of tissue distribution, ubiquitous.

The protein resides in the cytoplasm. It localises to the cytoskeleton. Its subcellular location is the cilium basal body. It is found in the nucleus. The protein localises to the cilium axoneme. The protein resides in the cytoplasmic vesicle. It localises to the golgi apparatus. Its subcellular location is the trans-Golgi network. Its function is as follows. Involved in the Hedgehog (Hh) signaling pathway, is essential for normal ciliogenesis. Regulates the proteolytic processing of GLI3 and cooperates with the transcription factor EMX1 in the induction of downstream Hh pathway gene expression and gonadotropin-releasing hormone production. WDR11 complex facilitates the tethering of Adaptor protein-1 complex (AP-1)-derived vesicles. WDR11 complex acts together with TBC1D23 to facilitate the golgin-mediated capture of vesicles generated using AP-1. In Homo sapiens (Human), this protein is WD repeat-containing protein 11 (WDR11).